The primary structure comprises 171 residues: Large ribosomal subunit protein bL9 (171 aa).

Belongs to the bacterial ribosomal protein bL9 family.

Binds to the 23S rRNA. The protein is Large ribosomal subunit protein bL9 of Rickettsia typhi (strain ATCC VR-144 / Wilmington).